The following is a 365-amino-acid chain: Histidinol-phosphate aminotransferase (365 aa).

N6-(pyridoxal phosphate)lysine is present on lysine 227.

The protein belongs to the class-II pyridoxal-phosphate-dependent aminotransferase family. Histidinol-phosphate aminotransferase subfamily. In terms of assembly, homodimer. It depends on pyridoxal 5'-phosphate as a cofactor.

The catalysed reaction is L-histidinol phosphate + 2-oxoglutarate = 3-(imidazol-4-yl)-2-oxopropyl phosphate + L-glutamate. It functions in the pathway amino-acid biosynthesis; L-histidine biosynthesis; L-histidine from 5-phospho-alpha-D-ribose 1-diphosphate: step 7/9. The polypeptide is Histidinol-phosphate aminotransferase (Campylobacter concisus (strain 13826)).